The chain runs to 199 residues: MRLTLRQIKWLKVAIWLAAALPFLWLILSVDQGWFSADPAKDIQHFTGRMTLKLLLATLLVTPLARYGKQPLLIRCRRLLGLWCFAWGTLHLVSYSVLELGLSNIGLLGRELVTRPYLTLGIISWLLLLSLAVTSTLWAQRKMGANWQKLHNLVYVVAILAPIHYLWSVKTLSPLPIIYAVTAAILLALRYKKFRQWCR.

The next 5 helical transmembrane spans lie at 10–30, 79–99, 118–138, 147–167, and 169–189; these read WLKV…ILSV, LLGL…SVLE, LTLG…STLW, WQKL…HYLW, and VKTL…LLAL.

The protein belongs to the MsrQ family. As to quaternary structure, heterodimer of a catalytic subunit (MsrP) and a heme-binding subunit (MsrQ). It depends on FMN as a cofactor. The cofactor is heme b.

The protein resides in the cell inner membrane. Functionally, part of the MsrPQ system that repairs oxidized periplasmic proteins containing methionine sulfoxide residues (Met-O), using respiratory chain electrons. Thus protects these proteins from oxidative-stress damage caused by reactive species of oxygen and chlorine generated by the host defense mechanisms. MsrPQ is essential for the maintenance of envelope integrity under bleach stress, rescuing a wide series of structurally unrelated periplasmic proteins from methionine oxidation. MsrQ provides electrons for reduction to the reductase catalytic subunit MsrP, using the quinone pool of the respiratory chain. The chain is Protein-methionine-sulfoxide reductase heme-binding subunit MsrQ from Yersinia enterocolitica serotype O:8 / biotype 1B (strain NCTC 13174 / 8081).